The following is a 147-amino-acid chain: Putative pre-16S rRNA nuclease (147 aa).

This sequence belongs to the YqgF nuclease family.

The protein localises to the cytoplasm. Its function is as follows. Could be a nuclease involved in processing of the 5'-end of pre-16S rRNA. In Ureaplasma parvum serovar 3 (strain ATCC 27815 / 27 / NCTC 11736), this protein is Putative pre-16S rRNA nuclease.